Here is a 238-residue protein sequence, read N- to C-terminus: COMM domain-containing protein 10 homolog Vlet (238 aa).

A compositionally biased stretch (low complexity) spans 43 to 77; that stretch reads ASASATSSTVGTSVTTTGRVDSSTEENPTSNTEPE. The interval 43–78 is disordered; sequence ASASATSSTVGTSVTTTGRVDSSTEENPTSNTEPEY. Residues 161-225 enclose the COMM domain; sequence VIEDVAWKLN…SIQGELDAML (65 aa).

This sequence belongs to the COMM domain-containing protein 10 family. Component of the commander complex consisting of the CCC subcomplex and the retriever subcomplex. Component of the CCC subcomplex. Interacts with Smn; along with Sbat and Hez may form an accessory subcomplex involved in SMN complex function.

Scaffold protein in the commander complex that is essential for endosomal recycling of transmembrane cargos; the commander complex is composed of the CCC subcomplex and the retriever subcomplex. May modulate activity of cullin-RING E3 ubiquitin ligase (CRL) complexes. May down-regulate activation of NF-kappa-B. May have an accessory function in the survival motor neuron (SMN) complex. Required for neuromuscular function and organismal viability. In Drosophila melanogaster (Fruit fly), this protein is COMM domain-containing protein 10 homolog Vlet.